Consider the following 460-residue polypeptide: Lysosomal proton-coupled steroid conjugate and bile acid symporter SLC46A3 (460 aa).

The first 25 residues, 1–25 (MKISFIEPAILLNAFAMTLTIPLTA), serve as a signal peptide directing secretion. Over 26-73 (QYVYRRIWEETGNYTFASNSNGSECDQNKSSSIFAFREEVQKKASLFN) the chain is Extracellular. N-linked (GlcNAc...) asparagine glycans are attached at residues N38, N46, and N53. The helical transmembrane segment at 74-94 (LQVEMSALIPGLVSTFMLLAS) threads the bilayer. At 95-111 (SDNHGRKLPMVLSSLGS) the chain is on the cytoplasmic side. A helical transmembrane segment spans residues 112–132 (LGTNTWLCMMSYFDLPLQLLI). Residues 133-135 (AST) are Extracellular-facing. A helical transmembrane segment spans residues 136–156 (FIGALFGNYTTFWGACFAYIV). The Cytoplasmic segment spans residues 157 to 170 (DQQKEYKHRIIRIA). A helical membrane pass occupies residues 171 to 191 (ILDFMLGVVTGLTGLSSGYFI). Residues 192–195 (RELG) lie on the Extracellular side of the membrane. A helical transmembrane segment spans residues 196–216 (FVWSYFITAMVLIVNLAYILF). At 217 to 257 (FLNDPIKESSSQIVTMSCIESLKDLFYRTYMLFKNGSSKRQ) the chain is on the cytoplasmic side. The chain crosses the membrane as a helical span at residues 258–278 (ALLCLLIFTLVIYFFVIIGIS). Over 279–301 (PIFTLYELGPPLCWNEVYIGYGS) the chain is Extracellular. Residues 302-322 (ALGSVSFLSSFLGIWLFSYCL) form a helical membrane-spanning segment. The Cytoplasmic portion of the chain corresponds to 323 to 324 (KD). The chain crosses the membrane as a helical span at residues 325–345 (IHIAYIGIFTTMVGMTLAAFT). At 346–347 (RT) the chain is on the extracellular side. Residues 348–368 (TLMMFLVRIPFIFTIMPLSVL) form a helical membrane-spanning segment. Residues 369–381 (RSMLSKVVHSTEQ) lie on the Cytoplasmic side of the membrane. A helical transmembrane segment spans residues 382–402 (GALFACIAFLETLAGVTSTSA). Residues 403–410 (YSGIYSAT) are Extracellular-facing. A helical membrane pass occupies residues 411–431 (VAWYPGFIFLLSAGLLVLPAI). Residues 432–460 (SLCCVKSIGWEEGSYTLLVHEEPSEHTSD) are Cytoplasmic-facing. Positions 446–449 (YTLL) match the Tyrosine-based lysosomal-sorting motif motif.

It belongs to the major facilitator superfamily. SLC46A family. Expressed in liver, kidney, small intestine and colon.

Its subcellular location is the lysosome membrane. The enzyme catalyses estrone 3-sulfate(out) + n H(+)(out) = estrone 3-sulfate(in) + n H(+)(in). It carries out the reaction 25-hydroxyvitamin D3 sulfate(out) + n H(+)(out) = 25-hydroxyvitamin D3 sulfate(in) + n H(+)(in). The catalysed reaction is cholate(out) + n H(+)(out) = cholate(in) + n H(+)(in). It catalyses the reaction glycocholate(out) + n H(+)(out) = glycocholate(in) + n H(+)(in). The enzyme catalyses taurocholate(out) + n H(+)(out) = taurocholate(in) + n H(+)(in). It carries out the reaction dehydroepiandrosterone 3-sulfate(out) + n H(+)(out) = dehydroepiandrosterone 3-sulfate(in) + n H(+)(in). The catalysed reaction is N-acetyl-D-muramoyl-L-alanyl-D-isoglutamine(out) + n H(+)(out) = N-acetyl-D-muramoyl-L-alanyl-D-isoglutamine(in) + n H(+)(in). It catalyses the reaction 2',3'-cGAMP(out) + n H(+)(out) = 2',3'-cGAMP(in) + n H(+)(in). Its function is as follows. Lysosomal proton-coupled steroid conjugate and bile acid transporter. Preferentially recognizes lipophilic steroid conjugates or bile acis as endogenous substrates and seems to mediate escape from lysosomes to the cytoplasm. Modulates hepatic cytosolic copper homeostasis, maybe acting as a lysosomal copper transporter and sequestering copper ions in the lysosome. Delivers pathogen-associated molecular patterns to cytosolic pattern recognition receptors as part of the innate immune response to microbes. Selectively transports bacterial muramyl dipeptide (MDP) into the cytosol for recognition by NOD2, triggering inflammatory responses. Likely acts as a redundant importer of cyclic GMP-AMP dinucleotides (cGAMPs) in monocyte and macrophage cell lineages. The transport mechanism, its electrogenicity and stoichiometry remain to be elucidated. The sequence is that of Lysosomal proton-coupled steroid conjugate and bile acid symporter SLC46A3 (Slc46a3) from Mus musculus (Mouse).